The sequence spans 284 residues: UPF0761 membrane protein IL2447 (284 aa).

A run of 6 helical transmembrane segments spans residues 41 to 61 (MLSL…FPMF), 98 to 118 (MTAI…SAID), 137 to 157 (FAVY…GLAA), 178 to 198 (FVLW…MYQL), 214 to 234 (VIAA…ITFF), and 247 to 267 (IPIL…GAVL).

It belongs to the UPF0761 family.

It localises to the cell inner membrane. This Idiomarina loihiensis (strain ATCC BAA-735 / DSM 15497 / L2-TR) protein is UPF0761 membrane protein IL2447.